The chain runs to 242 residues: Pyridoxine 5'-phosphate synthase (242 aa).

N6 contacts 3-amino-2-oxopropyl phosphate. 8-9 (DH) lines the 1-deoxy-D-xylulose 5-phosphate pocket. Position 17 (R17) interacts with 3-amino-2-oxopropyl phosphate. The Proton acceptor role is filled by H42. Residues R44 and H49 each coordinate 1-deoxy-D-xylulose 5-phosphate. The active-site Proton acceptor is the E69. T99 contributes to the 1-deoxy-D-xylulose 5-phosphate binding site. H190 (proton donor) is an active-site residue. Residues G191 and 212–213 (GH) contribute to the 3-amino-2-oxopropyl phosphate site.

Belongs to the PNP synthase family. As to quaternary structure, homooctamer; tetramer of dimers.

The protein localises to the cytoplasm. The catalysed reaction is 3-amino-2-oxopropyl phosphate + 1-deoxy-D-xylulose 5-phosphate = pyridoxine 5'-phosphate + phosphate + 2 H2O + H(+). It functions in the pathway cofactor biosynthesis; pyridoxine 5'-phosphate biosynthesis; pyridoxine 5'-phosphate from D-erythrose 4-phosphate: step 5/5. In terms of biological role, catalyzes the complicated ring closure reaction between the two acyclic compounds 1-deoxy-D-xylulose-5-phosphate (DXP) and 3-amino-2-oxopropyl phosphate (1-amino-acetone-3-phosphate or AAP) to form pyridoxine 5'-phosphate (PNP) and inorganic phosphate. This is Pyridoxine 5'-phosphate synthase from Neisseria meningitidis serogroup B (strain ATCC BAA-335 / MC58).